Consider the following 218-residue polypeptide: Small ribosomal subunit protein uS3c (218 aa).

A KH type-2 domain is found at 47–118 (VQKNMRTSSG…KLNIAVTRIA (72 aa)).

This sequence belongs to the universal ribosomal protein uS3 family. As to quaternary structure, part of the 30S ribosomal subunit.

It is found in the plastid. It localises to the chloroplast. The sequence is that of Small ribosomal subunit protein uS3c (rps3) from Nicotiana tomentosiformis (Tobacco).